The sequence spans 342 residues: L-threonine 3-dehydrogenase (342 aa).

Zn(2+) is bound at residue Cys38. Active-site charge relay system residues include Thr40 and His43. Positions 63, 64, 93, 96, 99, and 107 each coordinate Zn(2+). NAD(+) contacts are provided by residues Ile175, Asp195, Arg200, 262-264, and 286-287; these read LGI and IY.

It belongs to the zinc-containing alcohol dehydrogenase family. In terms of assembly, homotetramer. Zn(2+) serves as cofactor.

The protein localises to the cytoplasm. The catalysed reaction is L-threonine + NAD(+) = (2S)-2-amino-3-oxobutanoate + NADH + H(+). It functions in the pathway amino-acid degradation; L-threonine degradation via oxydo-reductase pathway; glycine from L-threonine: step 1/2. Its function is as follows. Catalyzes the NAD(+)-dependent oxidation of L-threonine to 2-amino-3-ketobutyrate. In Burkholderia vietnamiensis (strain G4 / LMG 22486) (Burkholderia cepacia (strain R1808)), this protein is L-threonine 3-dehydrogenase.